The chain runs to 365 residues: Histidinol-phosphate aminotransferase (365 aa).

Lys-227 carries the N6-(pyridoxal phosphate)lysine modification.

This sequence belongs to the class-II pyridoxal-phosphate-dependent aminotransferase family. Histidinol-phosphate aminotransferase subfamily. As to quaternary structure, homodimer. Pyridoxal 5'-phosphate serves as cofactor.

The catalysed reaction is L-histidinol phosphate + 2-oxoglutarate = 3-(imidazol-4-yl)-2-oxopropyl phosphate + L-glutamate. It participates in amino-acid biosynthesis; L-histidine biosynthesis; L-histidine from 5-phospho-alpha-D-ribose 1-diphosphate: step 7/9. The protein is Histidinol-phosphate aminotransferase of Polaromonas naphthalenivorans (strain CJ2).